The sequence spans 299 residues: MSDLPDTDFTQRFIFDERDVRGEWVSLDDSYAAVLARHEYPQPVKALLGELMAATALLVGAMKFDGLLILQARSAGPIPLLMVECSSDCEIRGMARYEAEQIPADASLSQLMPDGHLTLTIDPVKGQRYQGTVDLDGANLSECFTNYFIQSQQLNTRFWLNAEGGKARGLLLQQLPRDRQPDDEEREDSWQHVVALAKTLKPEEWAEGNETLLHRLYHEDAVRLFDIQPLRFNCSCSRERSGNALVSLGEHDAKALVEECGGTVEIDCQFCNERYFFDASDVAQLFAGGGTDVASETRH.

2 disulfides stabilise this stretch: Cys234/Cys236 and Cys268/Cys271.

This sequence belongs to the HSP33 family. In terms of processing, under oxidizing conditions two disulfide bonds are formed involving the reactive cysteines. Under reducing conditions zinc is bound to the reactive cysteines and the protein is inactive.

It localises to the cytoplasm. Its function is as follows. Redox regulated molecular chaperone. Protects both thermally unfolding and oxidatively damaged proteins from irreversible aggregation. Plays an important role in the bacterial defense system toward oxidative stress. The sequence is that of 33 kDa chaperonin from Pseudomonas putida (strain GB-1).